A 780-amino-acid chain; its full sequence is Chloride channel protein CLC-b (780 aa).

Residues 1–28 form a disordered region; the sequence is MVEEDLNQIGGNSNYNGEGGDPESNTLN. Transmembrane regions (helical) follow at residues 87–107, 130–150, 177–197, 205–225, 247–267, 277–297, 327–347, 370–390, 452–472, 477–497, 509–529, and 530–550; these read TLAC…NLAV, GLMV…VLCV, FGAT…AAGL, LVHI…DNHR, GSAA…LFAL, ALLW…REFI, VTDI…GSLY, VLLS…LPFL, MGSL…TFGI, GLFL…GAAM, AVLG…SLCV, and IFLE…VLLI. CBS domains lie at 594 to 663 and 708 to 770; these read AKPP…FLTE and TNTT…AFPL. The helical transmembrane segment at 735 to 755 threads the bilayer; the sequence is HLLIVPKIQASGMCPVVGILT.

It belongs to the chloride channel (TC 2.A.49) family. Homodimer. Interacts with PP2A5. As to expression, broadly expressed in the plant.

The protein resides in the membrane. Its function is as follows. Voltage-gated chloride channel. This Arabidopsis thaliana (Mouse-ear cress) protein is Chloride channel protein CLC-b (CLC-B).